A 251-amino-acid polypeptide reads, in one-letter code: DNA repair protein RecO (251 aa).

It belongs to the RecO family.

Its function is as follows. Involved in DNA repair and RecF pathway recombination. This chain is DNA repair protein RecO, found in Macrococcus caseolyticus (strain JCSC5402) (Macrococcoides caseolyticum).